Here is a 442-residue protein sequence, read N- to C-terminus: Probable carboxypeptidase PADG_04062 (442 aa).

Positions 1 to 20 are cleaved as a signal peptide; the sequence is MKLQYLVALLSVQAVPPVTA. N-linked (GlcNAc...) asparagine glycosylation occurs at Asn-102. Asp-160 provides a ligand contact to Zn(2+). Glu-192 acts as the Proton acceptor in catalysis. Glu-193 contacts Zn(2+). Residue Asn-343 is glycosylated (N-linked (GlcNAc...) asparagine).

This sequence belongs to the peptidase M20A family. Zn(2+) serves as cofactor.

Its subcellular location is the secreted. The sequence is that of Probable carboxypeptidase PADG_04062 from Paracoccidioides brasiliensis (strain Pb18).